Here is a 719-residue protein sequence, read N- to C-terminus: Putative RNA-binding protein involved in heterochromatin assembly (719 aa).

Positions 226–322 (KILYMNNLPP…NLANTKQPRV (97 aa)) constitute an RRM domain. Ser-345 carries the post-translational modification Phosphoserine. The RanBP2-type 1 zinc-finger motif lies at 355-384 (RPGDWNCPSCGFSNFQRRTACFRCSFPAPS). The segment at 389-415 (HTANSNNNVNSSRNNLNNRVNSGSSSN) is disordered. Residues 392-415 (NSNNNVNSSRNNLNNRVNSGSSSN) are compositionally biased toward low complexity. At Ser-455 the chain carries Phosphoserine. Residues 511–561 (NNNINGNGNGNGNNSNNNNNHNNNHNNNHHNGSINSNSNTNNNNNNNNGNN) are disordered. The RanBP2-type 2 zinc-finger motif lies at 581-610 (RAGDWKCSTCTYHNFAKNVVCLRCGGPKSI). Polar residues predominate over residues 622–649 (DSSTFGPASRTPSNNNISVNTNGGSNAG). The tract at residues 622 to 661 (DSSTFGPASRTPSNNNISVNTNGGSNAGRTDGNDNKGRDI) is disordered. Ser-630 bears the Phosphoserine mark. Residues 652-661 (DGNDNKGRDI) are compositionally biased toward basic and acidic residues.

Its subcellular location is the chromosome. It localises to the nucleus. In terms of biological role, may play a role in chromatin organization. The protein is Putative RNA-binding protein involved in heterochromatin assembly of Saccharomyces cerevisiae (strain ATCC 204508 / S288c) (Baker's yeast).